A 158-amino-acid polypeptide reads, in one-letter code: Small ribosomal subunit protein uS10m (158 aa).

It belongs to the universal ribosomal protein uS10 family.

It is found in the mitochondrion. This chain is Small ribosomal subunit protein uS10m (mrps-10), found in Caenorhabditis briggsae.